The chain runs to 133 residues: Holo-[acyl-carrier-protein] synthase (133 aa).

Mg(2+)-binding residues include D8 and E57.

This sequence belongs to the P-Pant transferase superfamily. AcpS family. Mg(2+) serves as cofactor.

It localises to the cytoplasm. It catalyses the reaction apo-[ACP] + CoA = holo-[ACP] + adenosine 3',5'-bisphosphate + H(+). Its function is as follows. Transfers the 4'-phosphopantetheine moiety from coenzyme A to a Ser of acyl-carrier-protein. The sequence is that of Holo-[acyl-carrier-protein] synthase from Bartonella bacilliformis (strain ATCC 35685 / KC583 / Herrer 020/F12,63).